Here is a 216-residue protein sequence, read N- to C-terminus: MDTQTLNFNKVHFVTSAPDIRHLPNDGGVEIAFAGRSNAGKSSALNTLTKHKNLARTSKTPGRTQLINLFELEPGKRLVDLPGYGYAQVPLEMKLKWQKSLAEYLQRRESLKGLVILMDIRHPLKDTDMNMLEWSSHRKLPVMLLLTKADKLSPGPRNNQVIKVRQAVAELGPQIQVEAFSSLTQIGVEKLAQTLTGWYLAGADDMTDGEQAPLEE.

In terms of domain architecture, EngB-type G spans 27–201 (GGVEIAFAGR…AQTLTGWYLA (175 aa)). Residues 35 to 42 (GRSNAGKS), 62 to 66 (GRTQL), 80 to 83 (DLPG), 147 to 150 (TKAD), and 180 to 182 (FSS) each bind GTP. Ser42 and Thr64 together coordinate Mg(2+).

The protein belongs to the TRAFAC class TrmE-Era-EngA-EngB-Septin-like GTPase superfamily. EngB GTPase family. The cofactor is Mg(2+).

Its function is as follows. Necessary for normal cell division and for the maintenance of normal septation. This is Probable GTP-binding protein EngB from Aeromonas hydrophila subsp. hydrophila (strain ATCC 7966 / DSM 30187 / BCRC 13018 / CCUG 14551 / JCM 1027 / KCTC 2358 / NCIMB 9240 / NCTC 8049).